The sequence spans 822 residues: Fibroblast growth factor receptor 1 (822 aa).

A signal peptide spans 1–21 (MWSWKCLLFWAVLVTATLCTA). Topologically, residues 22 to 376 (RPSPTLPEQA…AVMTSPLYLE (355 aa)) are extracellular. The Ig-like C2-type 1 domain occupies 25 to 119 (PTLPEQAQPW…DTTYFSVNVS (95 aa)). Cys55 and Cys101 form a disulfide bridge. Residues Asn77 and Asn117 are each glycosylated (N-linked (GlcNAc...) asparagine). A disordered region spans residues 120–154 (DALPSSEDDDDDDDSSSEEKETDNTKPNRMPVAPY). The segment covering 125-135 (SEDDDDDDDSS) has biased composition (acidic residues). The segment covering 136–145 (SEEKETDNTK) has biased composition (basic and acidic residues). Ig-like C2-type domains follow at residues 158–246 (PEKM…YQLD) and 255–357 (PILQ…AWLT). Residues 160-177 (KMEKKLHAVPAAKTVKFK) form a heparin-binding region. Cys178 and Cys230 form a disulfide bridge. N-linked (GlcNAc...) asparagine glycosylation is found at Asn227, Asn240, Asn264, Asn296, Asn317, and Asn330. Cys277 and Cys341 form a disulfide bridge. Residues 377–397 (IIIYCTGAFLISCMVGSVIVY) traverse the membrane as a helical segment. Topologically, residues 398–822 (KMKSGTKKSD…QLANGGLKRR (425 aa)) are cytoplasmic. A Phosphotyrosine; by autocatalysis modification is found at Tyr463. The Protein kinase domain occupies 478 to 767 (LVLGKPLGEG…VALTSNQEYL (290 aa)). Residues 484–490 (LGEGCFG), Lys514, 562–564 (EYA), and Asn568 contribute to the ATP site. Phosphotyrosine; by autocatalysis is present on residues Tyr583 and Tyr585. Catalysis depends on Asp623, which acts as the Proton acceptor. Positions 627 and 641 each coordinate ATP. Residues Tyr653, Tyr654, Tyr730, and Tyr766 each carry the phosphotyrosine; by autocatalysis modification. Over residues 778–792 (PSFPDTRSSTCSSGE) the composition is skewed to polar residues. The disordered stretch occupies residues 778 to 822 (PSFPDTRSSTCSSGEDSVFSHEPLPEEPCLPRHPAQLANGGLKRR).

Belongs to the protein kinase superfamily. Tyr protein kinase family. Fibroblast growth factor receptor subfamily. In terms of assembly, monomer. Homodimer after ligand binding. Interacts predominantly with FGF1 and FGF2, but can also interact with FGF3, FGF4, FGF5, FGF6, FGF8, FGF10, FGF19, FGF21, FGF22 and FGF23 (in vitro). Ligand specificity is determined by tissue-specific expression of isoforms, and differences in the third Ig-like domain are crucial for ligand specificity. Affinity for fibroblast growth factors (FGFs) is increased by heparan sulfate glycosaminoglycans that function as coreceptors. Likewise, KLB increases the affinity for FGF19, FGF21 and FGF23. Interacts (phosphorylated on Tyr-766) with PLCG1 (via SH2 domains). Interacts with FRS2. Interacts with RPS6KA1. Interacts (via C-terminus) with NEDD4 (via WW3 domain). Interacts with KL. Interacts with SHB (via SH2 domain). Interacts with GRB10. Interacts with ANOS1; this interaction does not interfere with FGF2-binding to FGFR1, but prevents binding of heparin-bound FGF2. Interacts with SOX2 and SOX3. Interacts with FLRT1, FLRT2 and FLRT3. Found in a ternary complex with FGF1 and ITGAV:ITGB3. Autophosphorylated. Binding of FGF family members together with heparan sulfate proteoglycan or heparin promotes receptor dimerization and autophosphorylation on tyrosine residues. Autophosphorylation occurs in trans between the two FGFR molecules present in the dimer and proceeds in a highly ordered manner. Initial autophosphorylation at Tyr-653 increases the kinase activity by a factor of 50 to 100. After this, Tyr-583 becomes phosphorylated, followed by phosphorylation of Tyr-463, Tyr-766, Tyr-583 and Tyr-585. In a third stage, Tyr-654 is autophosphorylated, resulting in a further tenfold increase of kinase activity. Phosphotyrosine residues provide docking sites for interacting proteins and so are crucial for FGFR1 function and its regulation. In terms of processing, ubiquitinated. FGFR1 is rapidly ubiquitinated by NEDD4 after autophosphorylation, leading to internalization and lysosomal degradation. CBL is recruited to activated FGFR1 via FRS2 and GRB2, and mediates ubiquitination and subsequent degradation of FGFR1. Post-translationally, N-glycosylated in the endoplasmic reticulum. The N-glycan chains undergo further maturation to an Endo H-resistant form in the Golgi apparatus. In terms of tissue distribution, detected in astrocytoma, neuroblastoma and adrenal cortex cell lines. Some isoforms are detected in foreskin fibroblast cell lines, however isoform 17, isoform 18 and isoform 19 are not detected in these cells.

It localises to the cell membrane. Its subcellular location is the nucleus. It is found in the cytoplasm. The protein localises to the cytosol. The protein resides in the cytoplasmic vesicle. The catalysed reaction is L-tyrosyl-[protein] + ATP = O-phospho-L-tyrosyl-[protein] + ADP + H(+). Its activity is regulated as follows. Present in an inactive conformation in the absence of bound ligand. Ligand binding leads to dimerization and activation by sequential autophosphorylation on tyrosine residues. Inhibited by ARQ 069; this compound maintains the kinase in an inactive conformation and inhibits autophosphorylation. Inhibited by PD173074. Its function is as follows. Tyrosine-protein kinase that acts as a cell-surface receptor for fibroblast growth factors and plays an essential role in the regulation of embryonic development, cell proliferation, differentiation and migration. Required for normal mesoderm patterning and correct axial organization during embryonic development, normal skeletogenesis and normal development of the gonadotropin-releasing hormone (GnRH) neuronal system. Phosphorylates PLCG1, FRS2, GAB1 and SHB. Ligand binding leads to the activation of several signaling cascades. Activation of PLCG1 leads to the production of the cellular signaling molecules diacylglycerol and inositol 1,4,5-trisphosphate. Phosphorylation of FRS2 triggers recruitment of GRB2, GAB1, PIK3R1 and SOS1, and mediates activation of RAS, MAPK1/ERK2, MAPK3/ERK1 and the MAP kinase signaling pathway, as well as of the AKT1 signaling pathway. Promotes phosphorylation of SHC1, STAT1 and PTPN11/SHP2. In the nucleus, enhances RPS6KA1 and CREB1 activity and contributes to the regulation of transcription. FGFR1 signaling is down-regulated by IL17RD/SEF, and by FGFR1 ubiquitination, internalization and degradation. This chain is Fibroblast growth factor receptor 1 (FGFR1), found in Homo sapiens (Human).